Reading from the N-terminus, the 1262-residue chain is Synaptopodin-2 (1262 aa).

The segment at 1-174 (MGTGDFICIS…PGSQEGHLVE (174 aa)) is interaction with VPS18. Positions 6–88 (FICISMTGGA…SLHLLIKRPT (83 aa)) constitute a PDZ domain. Composition is skewed to polar residues over residues 89 to 105 (SGTS…TNHQ) and 246 to 260 (TSLT…SSGR). Disordered regions lie at residues 89 to 114 (SGTS…GPME) and 239 to 276 (PAPE…TGLP). Residues Ser304, Ser323, and Ser324 each carry the phosphoserine modification. Residues 323–363 (SSEGTEQGEDQRSGKDQGRPHKHRARHARLRRSESLSEKQV) form a disordered region. Thr327 carries the phosphothreonine modification. The segment covering 331-341 (EDQRSGKDQGR) has biased composition (basic and acidic residues). Over residues 342-352 (PHKHRARHARL) the composition is skewed to basic residues. Residues 353-363 (RRSESLSEKQV) are compositionally biased toward basic and acidic residues. The Nuclear localization signal motif lies at 392–400 (KKRRRRARK). Interaction with ACTN2 regions lie at residues 477-658 (MEML…FYDS), 659-922 (SEQI…PPVA), and 899-1153 (QSPT…NIEE). Disordered regions lie at residues 503–576 (AQNE…GPQR) and 592–703 (NQTA…SPNP). Residues Ser518, Ser543, Ser544, Ser546, and Ser549 each carry the phosphoserine modification. 2 F-actin binding regions span residues 530–658 (TSYQ…FYDS) and 659–801 (SEQI…VTAV). Over residues 540–552 (RMQSSVSESSFQM) the composition is skewed to low complexity. Residues 554 to 560 (RSLGSVP) are interaction with YWHAB. Position 558 is a phosphoserine; by PKA (Ser558). Polar residues-rich tracts occupy residues 558 to 569 (SVPQQNGFSGVS) and 592 to 606 (NQTA…SVTS). Residue Ser599 is modified to Phosphoserine. Residues 602-809 (QSVTSPIPDF…AVSSIKIAQP (208 aa)) form an interaction with YWHAB region. Thr605 carries the phosphothreonine; by PKA and CaMK2 modification. Phosphoserine is present on Ser606. 2 stretches are compositionally biased toward pro residues: residues 609-625 (PDFP…PPPE) and 639-650 (AQPPPWPQPAPW). The interval 610–621 (DFPAPPPYSAVS) is interaction with BAG3. Positions 614–617 (PPPY) match the PPPY motif motif. Residue Tyr617 is modified to Phosphotyrosine. Ser621 bears the Phosphoserine mark. The segment at 659-914 (SEQIASRDER…LPASWKYSSN (256 aa)) is F-actin bundling activity. Phosphoserine is present on residues Ser700 and Ser724. 2 disordered regions span residues 741–799 (MQSS…PQVT) and 833–868 (VVSH…GMSG). Residues 745–898 (AKQKTPPPVA…DTVQAHTVRA (154 aa)) are actin binding. Thr749 is modified (phosphothreonine). Positions 756-782 (KPAVKTSSSSQPVAPVSPVWSPGVAPA) are enriched in low complexity. Phosphoserine is present on residues Ser772 and Ser776. Polar residues predominate over residues 786–799 (AFSTTNPPNPPQVT). Positions 808 to 1153 (QPTCPPARPA…EAFRPRNIEE (346 aa)) are interaction with FLNC. Phosphoserine is present on residues Ser900, Ser904, and Ser908. The interval 933 to 957 (LAAIKSQPPGAQASKTSKKKGKKPL) is disordered. The segment at 999–1018 (PAMKQALPPRQADIGSPTNA) is interaction with ZYX. Residues Ser1014, Ser1055, and Ser1090 each carry the phosphoserine modification.

It belongs to the synaptopodin family. As to quaternary structure, may self-associate in muscle cells under oxidative stress. Binds F-actin. Interacts with ACTN2; ACTN2 is proposed to anchor SYOP2 at Z lines in mature myocytes. Interacts with AKAP6, PPP3CA and CAMK2A. Interacts (phosphorylated form) with YWHAB; YWHAB competes with ACTN2 for interaction with SYNPO2. Interacts with KPNA2; mediating nuclear import of SYNOP2; dependent on interaction with YWHAB. Interacts with IPO13; may be implicated in SYNOP2 nuclear import. Interacts with ZYX, FLNC, ILK. Interacts with BAG3 (via WW 1 domain). May associate with the CASA complex consisting of HSPA8, HSPB8 and BAG3. Interacts with VPS18. In terms of processing, phosphorylated by PKA, and by CaMK2 at multiple sites. Dephosphorylated by calcineurin at Ser-558 and Thr-605; abrogating interaction with YWHAB and impairing nuclear import.

The protein localises to the nucleus. The protein resides in the cytoplasm. It is found in the cytoskeleton. It localises to the myofibril. Its subcellular location is the sarcomere. The protein localises to the z line. The protein resides in the cell junction. It is found in the focal adhesion. Functionally, has an actin-binding and actin-bundling activity. Can induce the formation of F-actin networks. At the sarcomeric Z lines is proposed to act as adapter protein that links nascent myofibers to the sarcolemma via ZYX and may play a role in early assembly and stabilization of the Z lines. Involved in autophagosome formation. May play a role in chaperone-assisted selective autophagy (CASA) involved in Z lines maintenance in striated muscle under mechanical tension; may link the client-processing CASA chaperone machinery to a membrane-tethering and fusion complex providing autophagosome membranes. Involved in regulation of cell migration. May be a tumor suppressor. This Rattus norvegicus (Rat) protein is Synaptopodin-2 (Synpo2).